A 381-amino-acid chain; its full sequence is Erythronate-4-phosphate dehydrogenase (381 aa).

Ser-45 and Thr-66 together coordinate substrate. NAD(+)-binding residues include Asp-146 and Thr-173. Arg-206 is an active-site residue. Asp-230 serves as a coordination point for NAD(+). Glu-235 is an active-site residue. The active-site Proton donor is His-252. Gly-255 contacts NAD(+). Tyr-256 serves as a coordination point for substrate.

Belongs to the D-isomer specific 2-hydroxyacid dehydrogenase family. PdxB subfamily. As to quaternary structure, homodimer.

The protein resides in the cytoplasm. It carries out the reaction 4-phospho-D-erythronate + NAD(+) = (R)-3-hydroxy-2-oxo-4-phosphooxybutanoate + NADH + H(+). The protein operates within cofactor biosynthesis; pyridoxine 5'-phosphate biosynthesis; pyridoxine 5'-phosphate from D-erythrose 4-phosphate: step 2/5. Its function is as follows. Catalyzes the oxidation of erythronate-4-phosphate to 3-hydroxy-2-oxo-4-phosphonooxybutanoate. This is Erythronate-4-phosphate dehydrogenase from Hahella chejuensis (strain KCTC 2396).